The sequence spans 194 residues: Small ribosomal subunit protein uS4c (194 aa).

The S4 RNA-binding domain maps to 82 to 143 (MRLDNILFRL…KQRSKALIQD (62 aa)).

Belongs to the universal ribosomal protein uS4 family. As to quaternary structure, part of the 30S ribosomal subunit. Contacts protein S5. The interaction surface between S4 and S5 is involved in control of translational fidelity.

It localises to the plastid. The protein localises to the chloroplast. Its function is as follows. One of the primary rRNA binding proteins, it binds directly to 16S rRNA where it nucleates assembly of the body of the 30S subunit. Functionally, with S5 and S12 plays an important role in translational accuracy. The protein is Small ribosomal subunit protein uS4c (rps4) of Bobartia gladiata (Sword rush-lily).